Consider the following 483-residue polypeptide: Phloretin 2'-O-glucosyltransferase (483 aa).

Catalysis depends on His-15, which acts as the Proton acceptor. An anthocyanidin is bound at residue His-15. Asp-118 acts as the Charge relay in catalysis. Residues Thr-140, Ala-360, Gln-362, His-377, Trp-380, Asn-381, Ser-382, and Glu-385 each contribute to the UDP-alpha-D-glucose site. Position 400 (Ala-400) interacts with an anthocyanidin. The UDP-alpha-D-glucose site is built by Glu-401 and Gln-402.

This sequence belongs to the UDP-glycosyltransferase family.

The catalysed reaction is phloretin + UDP-alpha-D-glucose = phlorizin + UDP + H(+). Its function is as follows. Glycosyltransferase that possesses phloretin 2'-O-glycosyltransferase activity. Converts phloretin to phlorizin (phloretin 2'-O-glucoside), a potent antioxidant. Is specific for phloretin and does not possess glycosyltransferase activity toward caffeic acid, catechin, chlorogenic acid, 2-coumaric acid, 3-coumaric acid, 4-coumaric acid, cyanidin, 3,4-dihydroxyhydrocinnamic acid, epicatechin, 3-hydroxybenzoic acid, naringenin, 3,4-dihydroxybenzoic acid, quercetin and rutin. Can glycosylate phloretin in the presence of UDP-glucose, UDP-xylose and UDP-galactose. In Malus domestica (Apple), this protein is Phloretin 2'-O-glucosyltransferase.